Reading from the N-terminus, the 260-residue chain is Adenosylcobinamide-GDP ribazoletransferase (260 aa).

Transmembrane regions (helical) follow at residues A40–L60, A64–L84, Y117–A137, P142–W162, Q188–L208, and R209–I229.

It belongs to the CobS family. Requires Mg(2+) as cofactor.

It localises to the cell inner membrane. The catalysed reaction is alpha-ribazole + adenosylcob(III)inamide-GDP = adenosylcob(III)alamin + GMP + H(+). It carries out the reaction alpha-ribazole 5'-phosphate + adenosylcob(III)inamide-GDP = adenosylcob(III)alamin 5'-phosphate + GMP + H(+). Its pathway is cofactor biosynthesis; adenosylcobalamin biosynthesis; adenosylcobalamin from cob(II)yrinate a,c-diamide: step 7/7. Functionally, joins adenosylcobinamide-GDP and alpha-ribazole to generate adenosylcobalamin (Ado-cobalamin). Also synthesizes adenosylcobalamin 5'-phosphate from adenosylcobinamide-GDP and alpha-ribazole 5'-phosphate. This Rhizobium johnstonii (strain DSM 114642 / LMG 32736 / 3841) (Rhizobium leguminosarum bv. viciae) protein is Adenosylcobinamide-GDP ribazoletransferase.